A 156-amino-acid chain; its full sequence is Lipoprotein signal peptidase (156 aa).

A run of 2 helical transmembrane segments spans residues 57–77 and 83–103; these read LFLI…LFIN and ILKI…IDRI. Residues Asp110 and Asp129 contribute to the active site. A helical membrane pass occupies residues 124-144; sequence IFNIADVLVSLGTILLIIFII.

Belongs to the peptidase A8 family.

It is found in the cell membrane. It catalyses the reaction Release of signal peptides from bacterial membrane prolipoproteins. Hydrolyzes -Xaa-Yaa-Zaa-|-(S,diacylglyceryl)Cys-, in which Xaa is hydrophobic (preferably Leu), and Yaa (Ala or Ser) and Zaa (Gly or Ala) have small, neutral side chains.. It functions in the pathway protein modification; lipoprotein biosynthesis (signal peptide cleavage). Its function is as follows. This protein specifically catalyzes the removal of signal peptides from prolipoproteins. In Clostridium tetani (strain Massachusetts / E88), this protein is Lipoprotein signal peptidase.